The sequence spans 473 residues: Ribulose bisphosphate carboxylase large chain (473 aa).

Substrate contacts are provided by Asn-116 and Thr-166. Lys-168 acts as the Proton acceptor in catalysis. Lys-170 contacts substrate. Mg(2+) is bound by residues Lys-194, Asp-196, and Glu-197. Lys-194 bears the N6-carboxylysine mark. His-287 (proton acceptor) is an active-site residue. Positions 288, 320, and 372 each coordinate substrate.

It belongs to the RuBisCO large chain family. Type I subfamily. As to quaternary structure, heterohexadecamer of 8 large chains and 8 small chains. It depends on Mg(2+) as a cofactor.

It catalyses the reaction 2 (2R)-3-phosphoglycerate + 2 H(+) = D-ribulose 1,5-bisphosphate + CO2 + H2O. The enzyme catalyses D-ribulose 1,5-bisphosphate + O2 = 2-phosphoglycolate + (2R)-3-phosphoglycerate + 2 H(+). Functionally, ruBisCO catalyzes two reactions: the carboxylation of D-ribulose 1,5-bisphosphate, the primary event in carbon dioxide fixation, as well as the oxidative fragmentation of the pentose substrate. Both reactions occur simultaneously and in competition at the same active site. This chain is Ribulose bisphosphate carboxylase large chain, found in Cupriavidus metallidurans (strain ATCC 43123 / DSM 2839 / NBRC 102507 / CH34) (Ralstonia metallidurans).